The chain runs to 125 residues: Anticoagulant salivary protein 14 (125 aa).

The N-terminal stretch at 1-21 is a signal peptide; that stretch reads MGLTGTMLVLVSLAFFGSAAA. Asparagine 26, asparagine 81, and asparagine 87 each carry an N-linked (GlcNAc...) asparagine glycan. The span at 75–86 shows a compositional bias: polar residues; sequence GECHLTNNSGGP. The interval 75 to 125 is disordered; it reads GECHLTNNSGGPNETDDYTPAPTEKPKQKKKKTKKTKKPKRKSKKDQEKNL. The interval 91–125 is responsible for anticoagulant activity; it reads DYTPAPTEKPKQKKKKTKKTKKPKRKSKKDQEKNL. Residues 101-118 show a composition bias toward basic residues; the sequence is KQKKKKTKKTKKPKRKSK.

It belongs to the salp14 family. In terms of tissue distribution, salivary gland (at protein level). Saliva (at protein level).

Its subcellular location is the secreted. Its function is as follows. Salivary anticoagulant protein that facilitates blood feeding of adult ticks on vertebrate species. Inhibits host coagulation factor Xa (F10). Blocks the assembly and/or early activity of the prothrombinase complex (Xa-Va/F10-F5). Inhibits the lectin pathway of complement system activation in the host. This chain is Anticoagulant salivary protein 14, found in Ixodes scapularis (Black-legged tick).